The chain runs to 354 residues: Peptide chain release factor 1 (354 aa).

An N5-methylglutamine modification is found at Gln-231. Basic and acidic residues predominate over residues 284-304 (EALAKDRKEQVGSGDRSERIR). Residues 284–308 (EALAKDRKEQVGSGDRSERIRTYNF) form a disordered region.

This sequence belongs to the prokaryotic/mitochondrial release factor family. In terms of processing, methylated by PrmC. Methylation increases the termination efficiency of RF1.

It localises to the cytoplasm. In terms of biological role, peptide chain release factor 1 directs the termination of translation in response to the peptide chain termination codons UAG and UAA. The chain is Peptide chain release factor 1 from Nitratiruptor sp. (strain SB155-2).